Reading from the N-terminus, the 597-residue chain is Cytosolic phospholipase A2 gamma (597 aa).

The PLA2c domain maps to Met1 to Asp597. Ser83 functions as the Nucleophile in the catalytic mechanism. Residue Asp417 is the Proton acceptor of the active site. The disordered stretch occupies residues Arg576–Asp597. Over residues Glu587 to Asp597 the composition is skewed to basic and acidic residues.

As to expression, highly expressed in ovary, where it localizes to oocytes in preantral and antral stage follicles (at protein level). Not detected in other tissues tested.

Its subcellular location is the nucleus. It is found in the nucleoplasm. It localises to the nucleus envelope. The protein localises to the cytoplasm. The protein resides in the cell cortex. Its subcellular location is the cytoskeleton. It is found in the spindle. It carries out the reaction a 1,2-diacyl-sn-glycero-3-phosphocholine + H2O = a 1-acyl-sn-glycero-3-phosphocholine + a fatty acid + H(+). It catalyses the reaction a 1-O-alkyl-2-acyl-sn-glycero-3-phosphocholine + H2O = a 1-O-alkyl-sn-glycero-3-phosphocholine + a fatty acid + H(+). The enzyme catalyses 1,2-dihexadecanoyl-sn-glycero-3-phosphocholine + H2O = 1-hexadecanoyl-sn-glycero-3-phosphocholine + hexadecanoate + H(+). The catalysed reaction is 1-hexadecanoyl-2-(9Z-octadecenoyl)-sn-glycero-3-phosphocholine + H2O = 1-hexadecanoyl-sn-glycero-3-phosphocholine + (9Z)-octadecenoate + H(+). It carries out the reaction 1-hexadecanoyl-2-(9Z,12Z-octadecadienoyl)-sn-glycero-3-phosphocholine + H2O = (9Z,12Z)-octadecadienoate + 1-hexadecanoyl-sn-glycero-3-phosphocholine + H(+). It catalyses the reaction 1-hexadecanoyl-2-(5Z,8Z,11Z,14Z-eicosatetraenoyl)-sn-glycero-3-phosphocholine + H2O = 1-hexadecanoyl-sn-glycero-3-phosphocholine + (5Z,8Z,11Z,14Z)-eicosatetraenoate + H(+). The enzyme catalyses 1-O-hexadecyl-2-(5Z,8Z,11Z,14Z)-eicosatetraenoyl-sn-glycero-3-phosphocholine + H2O = 1-O-hexadecyl-sn-glycero-3-phosphocholine + (5Z,8Z,11Z,14Z)-eicosatetraenoate + H(+). The catalysed reaction is 1-hexadecanoyl-2-(5Z,8Z,11Z,14Z-eicosatetraenoyl)-sn-glycero-3-phosphocholine + H2O = 2-(5Z,8Z,11Z,14Z)-eicosatetraenoyl-sn-glycero-3-phosphocholine + hexadecanoate + H(+). It carries out the reaction a 1-acyl-sn-glycero-3-phosphocholine + H2O = sn-glycerol 3-phosphocholine + a fatty acid + H(+). It catalyses the reaction 1-hexadecanoyl-sn-glycero-3-phosphocholine + H2O = sn-glycerol 3-phosphocholine + hexadecanoate + H(+). The enzyme catalyses 2 1-hexadecanoyl-sn-glycero-3-phosphocholine = 1,2-dihexadecanoyl-sn-glycero-3-phosphocholine + sn-glycerol 3-phosphocholine. The catalysed reaction is 1-hexadecanoyl-sn-glycero-3-phosphoethanolamine + 1-hexadecanoyl-sn-glycero-3-phosphocholine = 1,2-dihexadecanoyl-sn-glycero-3-phosphoethanolamine + sn-glycerol 3-phosphocholine. It carries out the reaction 1-hexadecanoyl-sn-glycero-3-phosphoethanolamine + 1-hexadecanoyl-sn-glycero-3-phosphocholine = sn-glycero-3-phosphoethanolamine + 1,2-dihexadecanoyl-sn-glycero-3-phosphocholine. It catalyses the reaction 2 1-hexadecanoyl-sn-glycero-3-phosphoethanolamine = 1,2-dihexadecanoyl-sn-glycero-3-phosphoethanolamine + sn-glycero-3-phosphoethanolamine. The enzyme catalyses 1-O-hexadecyl-sn-glycero-3-phosphocholine + 1-hexadecanoyl-sn-glycero-3-phosphocholine = 1-O-hexadecyl-2-hexadecanoyl-sn-glycero-3-phosphocholine + sn-glycerol 3-phosphocholine. The catalysed reaction is a 1-O-(1Z-alkenyl)-sn-glycero-3-phosphoethanolamine + 1-hexadecanoyl-sn-glycero-3-phosphocholine = 1-O-(1Z)-alkenyl-2-hexadecanoyl-sn-glycero-3-phosphoethanolamine + sn-glycerol 3-phosphocholine. It carries out the reaction 1-O-hexadecyl-sn-glycero-3-phosphocholine + 1-hexadecanoyl-sn-glycero-3-phosphoethanolamine = 1-O-hexadecyl-2-hexadecanoyl-sn-glycero-3-phosphocholine + sn-glycero-3-phosphoethanolamine. It catalyses the reaction 1-octadecanoyl-2-(5Z,8Z,11Z,14Z)-eicosatetraenoyl-sn-glycero-3-phosphoethanolamine + 1-hexadecanoyl-sn-glycero-3-phosphocholine = 1-octadecanoyl-sn-glycero-3-phosphoethanolamine + 1-hexadecanoyl-2-(5Z,8Z,11Z,14Z-eicosatetraenoyl)-sn-glycero-3-phosphocholine. The enzyme catalyses 1-octadecanoyl-2-(5Z,8Z,11Z,14Z)-eicosatetraenoyl-sn-glycero-3-phosphoethanolamine + 1-O-hexadecyl-sn-glycero-3-phosphocholine = 1-octadecanoyl-sn-glycero-3-phosphoethanolamine + 1-O-hexadecyl-2-(5Z,8Z,11Z,14Z)-eicosatetraenoyl-sn-glycero-3-phosphocholine. The catalysed reaction is 1-hexadecanoyl-2-(9Z,12Z-octadecadienoyl)-sn-glycero-3-phosphocholine + a 1-O-(1Z-alkenyl)-sn-glycero-3-phosphoethanolamine = 1-O-(1Z-alkenyl)-2-(9Z,12Z-octadecadienoyl)-sn-glycero-3-phosphoethanolamine + 1-hexadecanoyl-sn-glycero-3-phosphocholine. It carries out the reaction 1-hexadecanoyl-2-(5Z,8Z,11Z,14Z-eicosatetraenoyl)-sn-glycero-3-phosphocholine + a 1-O-(1Z-alkenyl)-sn-glycero-3-phosphoethanolamine = 1-O-(1Z)-alkenyl-2-(5Z,8Z,11Z,14Z)-eicosatetraenoyl-sn-glycero-3-phosphoethanolamine + 1-hexadecanoyl-sn-glycero-3-phosphocholine. Its function is as follows. Calcium-independent phospholipase, lysophospholipase and O-acyltransferase involved in phospholipid remodeling. Preferentially hydrolyzes the ester bond of the fatty acyl group attached at sn-2 position of phospholipids with choline and ethanolamine head groups, producing lysophospholipids that are used in deacylation-reacylation cycles. Transfers the sn-1 fatty acyl from one lysophospholipid molecule to the sn-2 position of another lysophospholipid to form diacyl, alkylacyl and alkenylacyl glycerophospholipids. Cleaves ester bonds but not alkyl or alkenyl ether bonds at the sn-1 position of lysophospholipids. Catalyzes sn-2 fatty acyl transfer from phospholipids to the sn-2 position of 1-O-alkyl or 1-O-alkenyl lysophospholipids with lower efficiency. The chain is Cytosolic phospholipase A2 gamma from Mus musculus (Mouse).